The following is a 54-amino-acid chain: Protein YojO (54 aa).

The protein belongs to the YojO family.

In Escherichia coli (strain K12), this protein is Protein YojO (yojO).